The sequence spans 689 residues: Glycine--tRNA ligase beta subunit (689 aa).

This sequence belongs to the class-II aminoacyl-tRNA synthetase family. In terms of assembly, tetramer of two alpha and two beta subunits.

Its subcellular location is the cytoplasm. It catalyses the reaction tRNA(Gly) + glycine + ATP = glycyl-tRNA(Gly) + AMP + diphosphate. The protein is Glycine--tRNA ligase beta subunit of Escherichia coli (strain K12 / MC4100 / BW2952).